The primary structure comprises 320 residues: ATP-dependent 6-phosphofructokinase (320 aa).

Gly12 is an ATP binding site. Position 22-26 (22-26 (RGVVR)) interacts with ADP. ATP-binding positions include 73-74 (RF) and 103-106 (GDGS). Mg(2+) is bound at residue Asp104. 126–128 (TID) lines the substrate pocket. The active-site Proton acceptor is the Asp128. Arg155 contributes to the ADP binding site. Substrate-binding positions include Arg163 and 170 to 172 (MGR). ADP is bound by residues 186 to 188 (GCE), Lys212, and 214 to 216 (KKH). Substrate contacts are provided by residues Glu223, Arg244, and 250–253 (HIQR).

Belongs to the phosphofructokinase type A (PFKA) family. ATP-dependent PFK group I subfamily. Prokaryotic clade 'B1' sub-subfamily. As to quaternary structure, homotetramer. Mg(2+) is required as a cofactor.

The protein localises to the cytoplasm. The enzyme catalyses beta-D-fructose 6-phosphate + ATP = beta-D-fructose 1,6-bisphosphate + ADP + H(+). Its pathway is carbohydrate degradation; glycolysis; D-glyceraldehyde 3-phosphate and glycerone phosphate from D-glucose: step 3/4. With respect to regulation, allosterically activated by ADP and other diphosphonucleosides, and allosterically inhibited by phosphoenolpyruvate. In terms of biological role, catalyzes the phosphorylation of D-fructose 6-phosphate to fructose 1,6-bisphosphate by ATP, the first committing step of glycolysis. The polypeptide is ATP-dependent 6-phosphofructokinase (Aliivibrio fischeri (strain ATCC 700601 / ES114) (Vibrio fischeri)).